The following is a 1365-amino-acid chain: Patatin-like phospholipase domain-containing protein 6 (1365 aa).

The Lumenal segment spans residues 1-50 (MGTSSHGLATNSSGAKVAERDGFQDVPAPGEGAAGRICGAQPVPFVPQVL). N-linked (GlcNAc...) asparagine glycosylation occurs at Asn-11. The helical transmembrane segment at 51 to 71 (GVMIGAGVAVVVTAVLILLVV) threads the bilayer. Over 72–1365 (RRLRVPKTPA…QEPPGSATDA (1294 aa)) the chain is Cytoplasmic. Residue 186–313 (VLGHFEKPLF…VRVVQIIMVR (128 aa)) coordinates a nucleoside 3',5'-cyclic phosphate. Disordered regions lie at residues 343–427 (FPSP…RSDF) and 441–463 (QEGA…PREQ). Residue Ser-345 is modified to Phosphoserine. Polar residues predominate over residues 350 to 367 (TRTSPVRGSKRMVSTSAT). A Phosphothreonine modification is found at Thr-352. Phosphoserine occurs at positions 353 and 363. Residues 375-389 (GRPPDPTGAPLPGPT) show a composition bias toward pro residues. Ser-411 is subject to Phosphoserine. At Thr-455 the chain carries Phosphothreonine. Residues 502–624 (ELAK…VAAR) and 620–740 (TVAA…LSQK) each bind a nucleoside 3',5'-cyclic phosphate. A PNPLA domain is found at 971–1137 (LVLGGGGARG…INNLPADIAR (167 aa)). Residues 975–980 (GGGARG) carry the GXGXXG motif. Residues 1002–1006 (GTSIG) carry the GXSXG motif. The Nucleophile role is filled by Ser-1004. The Proton acceptor role is filled by Asp-1124. A DGA/G motif is present at residues 1124–1126 (DGG). Residues 1296–1365 (SYVSDGCADG…QEPPGSATDA (70 aa)) form a disordered region. The span at 1303 to 1319 (ADGEESDCLTEYEEDAG) shows a compositional bias: acidic residues.

Belongs to the NTE family. In terms of processing, glycosylated.

Its subcellular location is the endoplasmic reticulum membrane. The catalysed reaction is a 1-acyl-sn-glycero-3-phosphocholine + H2O = sn-glycerol 3-phosphocholine + a fatty acid + H(+). It carries out the reaction 1-hexadecanoyl-sn-glycero-3-phosphocholine + H2O = sn-glycerol 3-phosphocholine + hexadecanoate + H(+). It catalyses the reaction 1-(9Z-octadecenoyl)-sn-glycero-3-phosphocholine + H2O = sn-glycerol 3-phosphocholine + (9Z)-octadecenoate + H(+). The enzyme catalyses 1-hexadecanoylglycerol + H2O = glycerol + hexadecanoate + H(+). The catalysed reaction is 2-hexadecanoylglycerol + H2O = glycerol + hexadecanoate + H(+). It carries out the reaction 1-(9Z-octadecenoyl)-glycerol + H2O = glycerol + (9Z)-octadecenoate + H(+). It catalyses the reaction 2-(9Z-octadecenoyl)-glycerol + H2O = glycerol + (9Z)-octadecenoate + H(+). The enzyme catalyses 2-(5Z,8Z,11Z,14Z-eicosatetraenoyl)-glycerol + H2O = glycerol + (5Z,8Z,11Z,14Z)-eicosatetraenoate + H(+). The catalysed reaction is 1-hexadecanoyl-sn-glycero-3-phosphate + H2O = sn-glycerol 3-phosphate + hexadecanoate + H(+). Inhibited by a series a OPs such as mipafox (MPX), phenyl saligenin phosphate (PSP), phenyl dipentyl phosphinate (PDPP), diisopropyl fluorophosphate and paraoxon. In terms of biological role, phospholipase B that deacylates intracellular phosphatidylcholine (PtdCho), generating glycerophosphocholine (GroPtdCho). This deacylation occurs at both sn-2 and sn-1 positions of PtdCho. Catalyzes the hydrolysis of several naturally occurring membrane-associated lipids. Hydrolyzes lysophospholipids and monoacylglycerols, preferring the 1-acyl to the 2-acyl isomer. Does not catalyze hydrolysis of di- or triacylglycerols or fatty acid amides. This is Patatin-like phospholipase domain-containing protein 6 (PNPLA6) from Pongo abelii (Sumatran orangutan).